Consider the following 1274-residue polypeptide: Meiosis inhibitor protein 1 (1274 aa).

Expressed predominantly in testis. Weakly expressed in spleen and thymus. Expressed in the ovaries, Fallopian tubes and uterus.

Functionally, required for normal meiotic chromosome synapsis. May be involved in the formation of meiotic double-strand breaks (DSBs) in spermatocytes. The polypeptide is Meiosis inhibitor protein 1 (Homo sapiens (Human)).